Consider the following 500-residue polypeptide: Probable cytochrome P450 514A2 (500 aa).

A helical membrane pass occupies residues 4–24; that stretch reads IYTIILTIIILVLIISIKDLF. Residue C446 coordinates heme.

This sequence belongs to the cytochrome P450 family. Heme serves as cofactor.

Its subcellular location is the membrane. The sequence is that of Probable cytochrome P450 514A2 (cyp514A2) from Dictyostelium discoideum (Social amoeba).